Consider the following 158-residue polypeptide: Transcription elongation factor GreA (158 aa).

This sequence belongs to the GreA/GreB family.

In terms of biological role, necessary for efficient RNA polymerase transcription elongation past template-encoded arresting sites. The arresting sites in DNA have the property of trapping a certain fraction of elongating RNA polymerases that pass through, resulting in locked ternary complexes. Cleavage of the nascent transcript by cleavage factors such as GreA or GreB allows the resumption of elongation from the new 3'terminus. GreA releases sequences of 2 to 3 nucleotides. This Pelagibacter ubique (strain HTCC1062) protein is Transcription elongation factor GreA.